The sequence spans 121 residues: Large ribosomal subunit protein uL14 (121 aa).

This sequence belongs to the universal ribosomal protein uL14 family. Part of the 50S ribosomal subunit. Forms a cluster with proteins L3 and L19. In the 70S ribosome, L14 and L19 interact and together make contacts with the 16S rRNA in bridges B5 and B8.

Binds to 23S rRNA. Forms part of two intersubunit bridges in the 70S ribosome. The polypeptide is Large ribosomal subunit protein uL14 (Opitutus terrae (strain DSM 11246 / JCM 15787 / PB90-1)).